The sequence spans 391 residues: Inositol-tetrakisphosphate 1-kinase 2 (391 aa).

Positions 90 and 132 each coordinate 1D-myo-inositol 1,3,4-trisphosphate. The ATP site is built by arginine 167 and lysine 217. Residues 178 to 384 (KLSDCSGSLF…FFQNLAQVKY (207 aa)) form the ATP-grasp domain. Positions 228 and 260 each coordinate 1D-myo-inositol 1,3,4-trisphosphate. ATP-binding positions include 249–260 (QEFVNHGGVMFK) and serine 275. Mg(2+)-binding residues include aspartate 340, aspartate 355, and asparagine 357. Asparagine 357 is a 1D-myo-inositol 1,3,4-trisphosphate binding site.

The protein belongs to the ITPK1 family. In terms of assembly, monomer. The cofactor is Mg(2+). As to expression, expressed in seedling roots, cotyledons, rosette leaves, cauline leaves, stems, flowers, siliques and seeds.

The enzyme catalyses 1D-myo-inositol 3,4,5,6-tetrakisphosphate + ATP = 1D-myo-inositol 1,3,4,5,6-pentakisphosphate + ADP + H(+). It catalyses the reaction 1D-myo-inositol 1,3,4-trisphosphate + ATP = 1D-myo-inositol 1,3,4,5-tetrakisphosphate + ADP + H(+). The catalysed reaction is 1D-myo-inositol 1,3,4-trisphosphate + ATP = 1D-myo-inositol 1,3,4,6-tetrakisphosphate + ADP + H(+). In terms of biological role, kinase that can phosphorylate various inositol polyphosphate such as Ins(3,4,5,6)P4 or Ins(1,3,4)P3. Phosphorylates Ins(3,4,5,6)P4 to form InsP5. This reaction is thought to have regulatory importance, since Ins(3,4,5,6)P4 is an inhibitor of plasma membrane Ca(2+)-activated Cl(-) channels, while Ins(1,3,4,5,6)P5 is not. Also phosphorylates Ins(1,3,4)P3 or a racemic mixture of Ins(1,4,6)P3 and Ins(3,4,6)P3 to form InsP4. Ins(1,3,4,6)P4 is an essential molecule in the hexakisphosphate (InsP6) pathway. Plays a role in seed coat development and lipid polyester barrier formation. The protein is Inositol-tetrakisphosphate 1-kinase 2 (ITPK2) of Arabidopsis thaliana (Mouse-ear cress).